Consider the following 330-residue polypeptide: Type II methyltransferase M.MthTI (330 aa).

The SAM-dependent MTase C5-type domain maps to 3–328; the sequence is MDIASFFSGA…KKIKKDLEGV (326 aa). The active site involves C73.

This sequence belongs to the class I-like SAM-binding methyltransferase superfamily. C5-methyltransferase family.

It carries out the reaction a 2'-deoxycytidine in DNA + S-adenosyl-L-methionine = a 5-methyl-2'-deoxycytidine in DNA + S-adenosyl-L-homocysteine + H(+). Functionally, a methylase that recognizes the double-stranded sequence 5'-GGCC-3', methylates C-3 on both strands, and protects the DNA from cleavage by the MthTI endonuclease. The polypeptide is Type II methyltransferase M.MthTI (mthTIM) (Methanothermobacter thermautotrophicus (Methanobacterium thermoformicicum)).